Reading from the N-terminus, the 813-residue chain is Polycomb group protein FERTILIZATION-INDEPENDENT SEED 2 (813 aa).

A disordered region spans residues 1–27 (MARKSIRGKEVVMVSDDDDDDDDVDDD). Positions 15-26 (SDDDDDDDDVDD) are enriched in acidic residues. Residues 134–155 (CPFCLIPCGGHEGLQLHLKSSH) form a C2H2-type zinc finger. Disordered regions lie at residues 197-216 (SPLT…DDSN), 232-261 (DLPR…SEKI), and 274-648 (ESSE…RKEL). The span at 232 to 246 (DLPRGTENDSTHVND) shows a compositional bias: basic and acidic residues. The A-1 repeat unit spans residues 243–264 (HVNDDNVSSPPRAHSSEKISDI). The tract at residues 243 to 542 (HVNDDNVSSP…HSSKKNKSTR (300 aa)) is 12 X approximate repeat A. The B-1 repeat unit spans residues 265-281 (LTTTQLAIAESSEPKVP). The interval 265 to 640 (LTTTQLAIAE…KAEPSEPKVT (376 aa)) is 7 X approximate repeat B. The A-2 repeat unit spans residues 282-304 (HVNDGNVSSPPRAHSSAEKNEST). Composition is skewed to basic and acidic residues over residues 296 to 307 (SSAEKNESTHVN), 319 to 331 (HSLE…HVNE), and 344 to 353 (KKNESTHMND). One copy of the A-3 repeat lies at 305–327 (HVNDDDDVSSPPRAHSLEKNEST). The A-4 repeat unit spans residues 328–349 (HVNEDNISSPPKAHSSKKNEST). The stretch at 350–371 (HMNDEDVSFPPRTRSSKETSDI) is one A-5 repeat. The B-2 repeat unit spans residues 372 to 388 (LTTTQPAIVEPSEPKVR). Residues 388-402 (RRGSRRKQLYAKRYK) are compositionally biased toward basic residues. Residues 403-419 (ARETQPAIAESSEPKVL) form a B-3 repeat. Composition is skewed to basic and acidic residues over residues 414–423 (SEPKVLHVND) and 453–462 (SEPKVPHVND). The A-6 repeat unit spans residues 420-441 (HVNDENVSSPPEAHSLEKASDI). The stretch at 442 to 458 (LTTTQPAIAESSEPKVP) is one B-4 repeat. Residues 459–481 (HVNDENVSSTPRAHSSKKNKSTR) form an A-7 repeat. Positions 472–481 (HSSKKNKSTR) are enriched in basic residues. Residues 482 to 502 (KNVDNVPSPPKTRSSKKTSDI) form an A-8 repeat. A compositionally biased stretch (polar residues) spans 501-512 (DILTTTQPTIAE). The B-5 repeat unit spans residues 503–519 (LTTTQPTIAESSEPKVR). Over residues 514 to 523 (SEPKVRHVND) the composition is skewed to basic and acidic residues. The stretch at 520 to 542 (HVNDDNVSSTPRAHSSKKNKSTR) is one A-9 repeat. The A-10 repeat unit spans residues 543–563 (KNDDNIPSPPKTRSSKKTSNI). A B-6 repeat occupies 564–579 (LTRTQPAIAESEPKVP). The segment covering 574 to 586 (SEPKVPHVNDDKV) has biased composition (basic and acidic residues). The stretch at 580 to 601 (HVNDDKVSSTPRAHSSKKNKST) is one A-11 repeat. Positions 593–602 (HSSKKNKSTH) are enriched in basic residues. An A-12 repeat occupies 602-623 (HKKDDNASLPPKTRSSKKTSDI). One copy of the B-7 repeat lies at 624-640 (LATTQPAKAEPSEPKVT). Residues 648-783 (LHAERCEAKR…CAKTFHKCTT (136 aa)) form a VEFS-box region.

The protein belongs to the VEFS (VRN2-EMF2-FIS2-SU(Z)12) family. In terms of assembly, probably indirectly associated with FIE and/or MEA. In plants, PcG complexes are probably composed of a member of the EZ family (CLF or MEA), FIE, and a member of the VEFS family (FIS2, VRN2 or EMF2). As to expression, weakly expressed. Expressed in late siliques.

The protein resides in the nucleus. Its function is as follows. Polycomb group (PcG) protein. PcG proteins act by forming multiprotein complexes, which are required to maintain the transcriptionally repressive state of homeotic genes throughout development. PcG proteins are not required to initiate repression, but to maintain it during later stages of development. They probably act via the methylation of histones, rendering chromatin heritably changed in its expressibility. Required to prevent the proliferation of the central cell by repressing unknown target genes before fertilization. Regulates the anteroposterior organization of the endosperm. This chain is Polycomb group protein FERTILIZATION-INDEPENDENT SEED 2, found in Arabidopsis thaliana (Mouse-ear cress).